We begin with the raw amino-acid sequence, 147 residues long: UPF0460 protein in nifX-nifW intergenic region (147 aa).

Belongs to the UPF0460 family.

The sequence is that of UPF0460 protein in nifX-nifW intergenic region from Frankia alni.